Here is a 228-residue protein sequence, read N- to C-terminus: 2,3-bisphosphoglycerate-dependent phosphoglycerate mutase (228 aa).

Substrate contacts are provided by residues 8–15 (RHGQSQWN), 21–22 (TG), Arg60, 87–90 (ERHY), Lys98, 114–115 (RR), and 180–181 (GN). His9 acts as the Tele-phosphohistidine intermediate in catalysis. Glu87 (proton donor/acceptor) is an active-site residue.

The protein belongs to the phosphoglycerate mutase family. BPG-dependent PGAM subfamily. Homodimer.

The catalysed reaction is (2R)-2-phosphoglycerate = (2R)-3-phosphoglycerate. It participates in carbohydrate degradation; glycolysis; pyruvate from D-glyceraldehyde 3-phosphate: step 3/5. In terms of biological role, catalyzes the interconversion of 2-phosphoglycerate and 3-phosphoglycerate. This Sphingopyxis alaskensis (strain DSM 13593 / LMG 18877 / RB2256) (Sphingomonas alaskensis) protein is 2,3-bisphosphoglycerate-dependent phosphoglycerate mutase.